Consider the following 182-residue polypeptide: MELGELLYNKSEYIETASGNKVSRQSVLCGSQNIVLNGKTIVMNDCIIRGDLANVRVGRHCVVKSRSVIRPPFKKFSKGVAFFPLHIGDHVFIEEDCVVNAAQIGSYVHVGKNCVIGRRCVLKDCCKILDNTVLPPETVVPPFTVFSGCPGLFSGELPECTQELMIDVTKSYYQKFLPLTRI.

At M1 the chain carries N-acetylmethionine.

This sequence belongs to the dynactin subunits 5/6 family. Dynactin subunit 5 subfamily. In terms of assembly, subunit of dynactin, a multiprotein complex part of a tripartite complex with dynein and a adapter, such as BICDL1, BICD2 or HOOK3. The dynactin complex is built around ACTR1A/ACTB filament and consists of an actin-related filament composed of a shoulder domain, a pointed end and a barbed end. Its length is defined by its flexible shoulder domain. The soulder is composed of 2 DCTN1 subunits, 4 DCTN2 and 2 DCTN3. The 4 DCNT2 (via N-terminus) bind the ACTR1A filament and act as molecular rulers to determine the length. The pointed end is important for binding dynein-dynactin cargo adapters. Consists of 4 subunits: ACTR10, DCNT4, DCTN5 and DCTN6. Within the complex DCTN6 forms a heterodimer with DCTN5. The barbed end is composed of a CAPZA1:CAPZB heterodimers, which binds ACTR1A/ACTB filament and dynactin and stabilizes dynactin. Interacts with N4BP2L1.

It localises to the cytoplasm. The protein localises to the cytoskeleton. The protein resides in the chromosome. It is found in the centromere. Its subcellular location is the kinetochore. Its function is as follows. Part of the dynactin complex that activates the molecular motor dynein for ultra-processive transport along microtubules. This Pongo abelii (Sumatran orangutan) protein is Dynactin subunit 5 (DCTN5).